Here is a 161-residue protein sequence, read N- to C-terminus: Gamma-glutamylaminecyclotransferase A (161 aa).

Position 26-29 (Tyr26–Leu29) interacts with substrate. Glu101 (proton acceptor) is an active-site residue.

It belongs to the gamma-glutamylcyclotransferase family.

The catalysed reaction is epsilon-(gamma-L-glutamyl)-L-lysine = 5-oxo-L-proline + L-lysine. In terms of biological role, may contribute to degradation of proteins cross-linked by transglutaminases by degrading the cross-link between a lysine and a glutamic acid residue. Catalyzes the formation of 5-oxo-L-proline from L-gamma-glutamyl-L-epsilon-lysine. This Danio rerio (Zebrafish) protein is Gamma-glutamylaminecyclotransferase A (ggact.1).